Here is a 266-residue protein sequence, read N- to C-terminus: uncharacterized protein (266 aa).

Positions 1-22 (MRYLKKLAWFISVIILGIFIIG) are cleaved as a signal peptide. Residue Cys-23 is the site of N-palmitoyl cysteine attachment. Residue Cys-23 is the site of S-diacylglycerol cysteine attachment.

Belongs to the staphylococcal tandem lipoprotein family.

It is found in the cell membrane. This is an uncharacterized protein from Staphylococcus aureus (strain USA300).